Here is a 458-residue protein sequence, read N- to C-terminus: Protein unc-93 homolog A (458 aa).

5 consecutive transmembrane segments (helical) span residues 8 to 28 (VLVV…LQNL), 42 to 62 (TLST…PILI), 69 to 89 (WTIV…FHAN), 90 to 110 (WYTL…LWSA), and 140 to 160 (IFFL…SLVF). A glycan (N-linked (GlcNAc...) asparagine) is linked at Asn190. Helical transmembrane passes span 202 to 222 (TLLG…AVFL), 258 to 275 (LCLL…QEFL), 286 to 306 (CALG…MTAL), 321 to 341 (AALY…FLLW), 345 to 365 (TNQL…DAVW), 390 to 410 (LGEA…CVST), and 412 to 432 (LYIL…VEYL).

Belongs to the unc-93 family.

It localises to the cell membrane. The polypeptide is Protein unc-93 homolog A (Unc93a) (Mus musculus (Mouse)).